The primary structure comprises 484 residues: Protein DETOXIFICATION 33 (484 aa).

Residues 1-16 (MGKDKTLPLLDPREPP) are compositionally biased toward basic and acidic residues. The tract at residues 1–22 (MGKDKTLPLLDPREPPELTGTK) is disordered. A run of 12 helical transmembrane segments spans residues 39-59 (LWEL…LGAL), 81-101 (VISG…ETLC), 122-142 (VILF…PPIL), 155-175 (AGKF…NFPI), 190-210 (WISG…ILYF), 218-238 (AITL…YILI), 267-287 (ALML…TGLL), 294-314 (VDAI…SIGF), 338-358 (VIVV…VVLA), 380-400 (IAVL…LSGV), 409-429 (LVAY…GLVL), and 439-459 (GIWG…IGII).

This sequence belongs to the multi antimicrobial extrusion (MATE) (TC 2.A.66.1) family.

The protein localises to the membrane. This Arabidopsis thaliana (Mouse-ear cress) protein is Protein DETOXIFICATION 33.